A 271-amino-acid polypeptide reads, in one-letter code: Large ribosomal subunit protein uL18 (271 aa).

Basic and acidic residues predominate over residues 245–264 (IRENPCPPKKERTKPADAKR). The disordered stretch occupies residues 245 to 271 (IRENPCPPKKERTKPADAKRWSPQAHL).

It belongs to the universal ribosomal protein uL18 family. Component of the large ribosomal subunit (LSU).

It is found in the cytoplasm. Its subcellular location is the nucleus. Functionally, component of the ribosome, a large ribonucleoprotein complex responsible for the synthesis of proteins in the cell. The small ribosomal subunit (SSU) binds messenger RNAs (mRNAs) and translates the encoded message by selecting cognate aminoacyl-transfer RNA (tRNA) molecules. The large subunit (LSU) contains the ribosomal catalytic site termed the peptidyl transferase center (PTC), which catalyzes the formation of peptide bonds, thereby polymerizing the amino acids delivered by tRNAs into a polypeptide chain. The nascent polypeptides leave the ribosome through a tunnel in the LSU and interact with protein factors that function in enzymatic processing, targeting, and the membrane insertion of nascent chains at the exit of the ribosomal tunnel. This is Large ribosomal subunit protein uL18 (RPL5) from Dunaliella salina (Green alga).